Here is a 301-residue protein sequence, read N- to C-terminus: Probable protein phosphatase 2C 4 (301 aa).

Over residues 1–18 (MGPYLSQPNKNKTTTSGE) the composition is skewed to polar residues. Positions 1–20 (MGPYLSQPNKNKTTTSGEGK) are disordered. The PPM-type phosphatase domain maps to 23-298 (IFAASEMQGW…DNMTTLIIYL (276 aa)). Residues aspartate 57, glycine 58, aspartate 237, and aspartate 289 each coordinate Mn(2+).

It belongs to the PP2C family. Mg(2+) is required as a cofactor. Mn(2+) serves as cofactor.

The protein localises to the membrane. It catalyses the reaction O-phospho-L-seryl-[protein] + H2O = L-seryl-[protein] + phosphate. It carries out the reaction O-phospho-L-threonyl-[protein] + H2O = L-threonyl-[protein] + phosphate. Functionally, enzyme with a broad specificity. The sequence is that of Probable protein phosphatase 2C 4 from Paramecium tetraurelia.